A 25-amino-acid polypeptide reads, in one-letter code: Small ribosomal subunit protein eS32A (25 aa).

The interval 1-25 (MRDKWRKKRVRRLKRKRRKMRARSK) is disordered.

This sequence belongs to the eukaryotic ribosomal protein eS32 family. In terms of assembly, component of the large ribosomal subunit (LSU). Mature yeast ribosomes consist of a small (40S) and a large (60S) subunit. The 40S small subunit contains 1 molecule of ribosomal RNA (18S rRNA) and at least 33 different proteins. The large 60S subunit contains 3 rRNA molecules (25S, 5.8S and 5S rRNA) and at least 46 different proteins.

The protein localises to the cytoplasm. It localises to the nucleus. Functionally, component of the ribosome, a large ribonucleoprotein complex responsible for the synthesis of proteins in the cell. The small ribosomal subunit (SSU) binds messenger RNAs (mRNAs) and translates the encoded message by selecting cognate aminoacyl-transfer RNA (tRNA) molecules. The large subunit (LSU) contains the ribosomal catalytic site termed the peptidyl transferase center (PTC), which catalyzes the formation of peptide bonds, thereby polymerizing the amino acids delivered by tRNAs into a polypeptide chain. The nascent polypeptides leave the ribosome through a tunnel in the LSU and interact with protein factors that function in enzymatic processing, targeting, and the membrane insertion of nascent chains at the exit of the ribosomal tunnel. This Schizosaccharomyces pombe (strain 972 / ATCC 24843) (Fission yeast) protein is Small ribosomal subunit protein eS32A (rpl4101).